A 254-amino-acid chain; its full sequence is Zinc import ATP-binding protein ZnuC (254 aa).

The 215-residue stretch at 5–219 folds into the ABC transporter domain; it reads VELKEVCLSF…PEFARLFGRP (215 aa). 37 to 44 contributes to the ATP binding site; it reads GPNGAGKS. The segment covering 233-242 has biased composition (basic and acidic residues); the sequence is CDGEHHHHEP. Positions 233-254 are disordered; that stretch reads CDGEHHHHEPQVPVIRLPSRNQ.

It belongs to the ABC transporter superfamily. Zinc importer (TC 3.A.1.15.5) family. The complex is composed of two ATP-binding proteins (ZnuC), two transmembrane proteins (ZnuB) and a solute-binding protein (ZnuA).

It is found in the cell inner membrane. The enzyme catalyses Zn(2+)(out) + ATP(in) + H2O(in) = Zn(2+)(in) + ADP(in) + phosphate(in) + H(+)(in). Part of the ABC transporter complex ZnuABC involved in zinc import. Responsible for energy coupling to the transport system. The sequence is that of Zinc import ATP-binding protein ZnuC from Aeromonas hydrophila subsp. hydrophila (strain ATCC 7966 / DSM 30187 / BCRC 13018 / CCUG 14551 / JCM 1027 / KCTC 2358 / NCIMB 9240 / NCTC 8049).